Here is a 359-residue protein sequence, read N- to C-terminus: DNA polymerase IV (359 aa).

A UmuC domain is found at 4-185 (IIHIDMDCYF…LSLRKIPGVG (182 aa)). 2 residues coordinate Mg(2+): D8 and D103. Residue E104 is part of the active site.

It belongs to the DNA polymerase type-Y family. Monomer. It depends on Mg(2+) as a cofactor.

The protein resides in the cytoplasm. It carries out the reaction DNA(n) + a 2'-deoxyribonucleoside 5'-triphosphate = DNA(n+1) + diphosphate. Poorly processive, error-prone DNA polymerase involved in untargeted mutagenesis. Copies undamaged DNA at stalled replication forks, which arise in vivo from mismatched or misaligned primer ends. These misaligned primers can be extended by PolIV. Exhibits no 3'-5' exonuclease (proofreading) activity. May be involved in translesional synthesis, in conjunction with the beta clamp from PolIII. The sequence is that of DNA polymerase IV from Shewanella sp. (strain MR-4).